The primary structure comprises 149 residues: 16.9 kDa class I heat shock protein 3 (149 aa).

In terms of domain architecture, sHSP spans 35 to 149 (DTAAFANARV…PEVKAIEISG (115 aa)).

This sequence belongs to the small heat shock protein (HSP20) family. As to quaternary structure, may form oligomeric structures.

Its subcellular location is the cytoplasm. This is 16.9 kDa class I heat shock protein 3 (HSP16.9C) from Oryza sativa subsp. japonica (Rice).